The primary structure comprises 162 residues: Cyclic pyranopterin monophosphate synthase (162 aa).

Substrate is bound by residues 75 to 77 (MCH) and 115 to 116 (ME). Asp-130 is an active-site residue.

This sequence belongs to the MoaC family. As to quaternary structure, homohexamer; trimer of dimers.

The enzyme catalyses (8S)-3',8-cyclo-7,8-dihydroguanosine 5'-triphosphate = cyclic pyranopterin phosphate + diphosphate. It participates in cofactor biosynthesis; molybdopterin biosynthesis. Its function is as follows. Catalyzes the conversion of (8S)-3',8-cyclo-7,8-dihydroguanosine 5'-triphosphate to cyclic pyranopterin monophosphate (cPMP). The chain is Cyclic pyranopterin monophosphate synthase from Geobacillus kaustophilus (strain HTA426).